The chain runs to 464 residues: Glycine--tRNA ligase (464 aa).

Substrate-binding residues include arginine 104 and glutamate 175. ATP-binding positions include 207–209 (RNE), 217–222 (FRTREF), 292–293 (EL), and 336–339 (GVNR). 222-226 (FEQME) is a substrate binding site. 332–336 (EPALG) lines the substrate pocket.

This sequence belongs to the class-II aminoacyl-tRNA synthetase family. Homodimer.

Its subcellular location is the cytoplasm. The enzyme catalyses tRNA(Gly) + glycine + ATP = glycyl-tRNA(Gly) + AMP + diphosphate. Functionally, catalyzes the attachment of glycine to tRNA(Gly). The polypeptide is Glycine--tRNA ligase (Leptospira borgpetersenii serovar Hardjo-bovis (strain JB197)).